A 745-amino-acid polypeptide reads, in one-letter code: Cytoskeleton-associated protein 2-like (745 aa).

The disordered stretch occupies residues 25 to 141 (AKGKLKSQNT…GELSRKPVGS (117 aa)). The segment covering 30–61 (KSQNTKPYLKSKNNCQNQPPSKSTIRPKNDVT) has biased composition (polar residues). Residues 109-120 (SSNPYSKPSSKS) show a composition bias toward low complexity. The span at 121 to 133 (FQQCEAGSSTTGE) shows a compositional bias: polar residues. Residues 185–187 (KEN) carry the KEN box motif. Residues 192–203 (LTEPERKPDPKL) show a composition bias toward basic and acidic residues. Disordered stretches follow at residues 192 to 217 (LTEPERKPDPKLYTRSKPKTDSYNQT), 256 to 276 (VKSQQLSRGADLARPGVKPSR), and 385 to 411 (RFNSAIPSTPSIRPNGTSGNKHNNNGF). A Glycyl lysine isopeptide (Lys-Gly) (interchain with G-Cter in SUMO1); alternate cross-link involves residue Lys-198. Lys-198 participates in a covalent cross-link: Glycyl lysine isopeptide (Lys-Gly) (interchain with G-Cter in SUMO2); alternate. Tyr-204 bears the Phosphotyrosine mark. Over residues 389-411 (AIPSTPSIRPNGTSGNKHNNNGF) the composition is skewed to polar residues. The residue at position 742 (Thr-742) is a Phosphothreonine. The residue at position 745 (Ser-745) is a Phosphoserine.

The protein belongs to the CKAP2 family. In terms of processing, ubiquitinated by the anaphase promoting complex/cyclosome (APC/C).

The protein localises to the cytoplasm. The protein resides in the cytoskeleton. Its subcellular location is the spindle pole. Its function is as follows. Microtubule-associated protein required for mitotic spindle formation and cell-cycle progression in neural progenitor cells. In Homo sapiens (Human), this protein is Cytoskeleton-associated protein 2-like (CKAP2L).